Here is an 872-residue protein sequence, read N- to C-terminus: Protein translocase subunit SecA (872 aa).

ATP contacts are provided by residues Q87, G105–T109, and D500. Positions 855, 857, 866, and 867 each coordinate Zn(2+).

It belongs to the SecA family. Monomer and homodimer. Part of the essential Sec protein translocation apparatus which comprises SecA, SecYEG and auxiliary proteins SecDF-YajC and YidC. The cofactor is Zn(2+).

It localises to the cell inner membrane. It is found in the cytoplasm. It catalyses the reaction ATP + H2O + cellular proteinSide 1 = ADP + phosphate + cellular proteinSide 2.. Its function is as follows. Part of the Sec protein translocase complex. Interacts with the SecYEG preprotein conducting channel. Has a central role in coupling the hydrolysis of ATP to the transfer of proteins into and across the cell membrane, serving both as a receptor for the preprotein-SecB complex and as an ATP-driven molecular motor driving the stepwise translocation of polypeptide chains across the membrane. The polypeptide is Protein translocase subunit SecA (Anaplasma marginale (strain St. Maries)).